We begin with the raw amino-acid sequence, 670 residues long: DNA ligase (670 aa).

NAD(+)-binding positions include 36-40 (DEEYD), 84-85 (SL), and glutamate 116. Lysine 118 functions as the N6-AMP-lysine intermediate in the catalytic mechanism. NAD(+)-binding residues include arginine 139, glutamate 177, lysine 293, and lysine 317. Zn(2+)-binding residues include cysteine 411, cysteine 414, cysteine 429, and cysteine 434. In terms of domain architecture, BRCT spans 594 to 670 (KKPSPLKGLT…SYEEFLKMLE (77 aa)).

It belongs to the NAD-dependent DNA ligase family. LigA subfamily. It depends on Mg(2+) as a cofactor. Requires Mn(2+) as cofactor.

The enzyme catalyses NAD(+) + (deoxyribonucleotide)n-3'-hydroxyl + 5'-phospho-(deoxyribonucleotide)m = (deoxyribonucleotide)n+m + AMP + beta-nicotinamide D-nucleotide.. Functionally, DNA ligase that catalyzes the formation of phosphodiester linkages between 5'-phosphoryl and 3'-hydroxyl groups in double-stranded DNA using NAD as a coenzyme and as the energy source for the reaction. It is essential for DNA replication and repair of damaged DNA. The protein is DNA ligase of Thermodesulfovibrio yellowstonii (strain ATCC 51303 / DSM 11347 / YP87).